Here is a 359-residue protein sequence, read N- to C-terminus: Methionine import ATP-binding protein MetN (359 aa).

Residues 1–21 form a disordered region; sequence MSTPASTPAPDGSHQRDHHPG. The ABC transporter domain maps to 24 to 264; sequence VEFRGVTKVF…PQTTVAQRFV (241 aa). ATP is bound at residue 61 to 68; that stretch reads GYSGAGKS.

It belongs to the ABC transporter superfamily. Methionine importer (TC 3.A.1.24) family. In terms of assembly, the complex is composed of two ATP-binding proteins (MetN), two transmembrane proteins (MetI) and a solute-binding protein (MetQ).

It is found in the cell membrane. It carries out the reaction L-methionine(out) + ATP + H2O = L-methionine(in) + ADP + phosphate + H(+). The catalysed reaction is D-methionine(out) + ATP + H2O = D-methionine(in) + ADP + phosphate + H(+). Part of the ABC transporter complex MetNIQ involved in methionine import. Responsible for energy coupling to the transport system. The chain is Methionine import ATP-binding protein MetN from Corynebacterium efficiens (strain DSM 44549 / YS-314 / AJ 12310 / JCM 11189 / NBRC 100395).